The following is a 205-amino-acid chain: Urease accessory protein UreG (205 aa).

GTP is bound at residue 14-21 (GPVGSGKT).

This sequence belongs to the SIMIBI class G3E GTPase family. UreG subfamily. Homodimer. UreD, UreF and UreG form a complex that acts as a GTP-hydrolysis-dependent molecular chaperone, activating the urease apoprotein by helping to assemble the nickel containing metallocenter of UreC. The UreE protein probably delivers the nickel.

Its subcellular location is the cytoplasm. Functionally, facilitates the functional incorporation of the urease nickel metallocenter. This process requires GTP hydrolysis, probably effectuated by UreG. The chain is Urease accessory protein UreG from Enterobacter sp. (strain 638).